A 69-amino-acid chain; its full sequence is Trypsin/subtilisin inhibitor (69 aa).

An intrachain disulfide couples Cys4 to Cys49.

This sequence belongs to the protease inhibitor I13 (potato type I serine protease inhibitor) family.

In terms of biological role, inhibitor of trypsin, chymotrypsin, subtilisin, etc. The sequence is that of Trypsin/subtilisin inhibitor from Amaranthus caudatus (Love-lies-bleeding).